A 199-amino-acid polypeptide reads, in one-letter code: Recombination protein RecR (199 aa).

The segment at cysteine 58–cysteine 73 adopts a C4-type zinc-finger fold. Positions leucine 81–proline 176 constitute a Toprim domain.

It belongs to the RecR family.

May play a role in DNA repair. It seems to be involved in an RecBC-independent recombinational process of DNA repair. It may act with RecF and RecO. The chain is Recombination protein RecR from Alkaliphilus oremlandii (strain OhILAs) (Clostridium oremlandii (strain OhILAs)).